Consider the following 389-residue polypeptide: Urotensin-2 receptor (389 aa).

2 stretches are compositionally biased toward polar residues: residues 1-10 (MALTPESPSS) and 28-39 (PNATLNSSWASP). The interval 1-39 (MALTPESPSSFPGLAAIGSSVPEPPGSPNATLNSSWASP) is disordered. Residues 1–54 (MALTPESPSSFPGLAAIGSSVPEPPGSPNATLNSSWASPTEPSSLEDLVATGAI) are Extracellular-facing. Residues Asn29 and Asn33 are each glycosylated (N-linked (GlcNAc...) asparagine). The chain crosses the membrane as a helical span at residues 55–77 (GTLLSAMGVVGVVGNAYTLVVTC). The Cytoplasmic segment spans residues 78-87 (RSLRAVASMY). The chain crosses the membrane as a helical span at residues 88–113 (IYVVNLALADLLYLLSIPFIVATYIT). Residues 114-124 (KEWHFGDVGCR) lie on the Extracellular side of the membrane. Cys123 and Cys199 form a disulfide bridge. Residues 125 to 146 (VLFSLDFLTMHASIFTLTVMSS) traverse the membrane as a helical segment. The Cytoplasmic portion of the chain corresponds to 147-167 (ERYAAVLRPLDTVQRPKGYRK). A helical transmembrane segment spans residues 168 to 186 (LLALGTWLLALLLTLPVML). The Extracellular segment spans residues 187 to 209 (AMRLVRRGPKSLCLPAWGPRAHR). Residues 210 to 232 (AYLTLLFATSIAGPGLLIGLLYA) traverse the membrane as a helical segment. The Cytoplasmic portion of the chain corresponds to 233-258 (RLARAYRRSQRASFKRARRPGARALR). A helical transmembrane segment spans residues 259-284 (LVLGIVLLFWACFLPFWLWQLLAQYR). Residues 285-297 (EAPLAPRTARIVN) lie on the Extracellular side of the membrane. The helical transmembrane segment at 298 to 318 (YLTTCLTYGNSCANPFLYTLL) threads the bilayer. The Cytoplasmic portion of the chain corresponds to 319 to 389 (TRNYRDHLRG…PALESPGDPA (71 aa)). Residues 328 to 366 (GRVRSPGSGGVRGPVPSLQPRARFQRGSGRSLSSCSPQP) form a disordered region. Over residues 355–366 (SGRSLSSCSPQP) the composition is skewed to polar residues.

It belongs to the G-protein coupled receptor 1 family.

Its subcellular location is the cell membrane. Its function is as follows. High affinity receptor for urotensin-2 and urotensin-2B. The activity of this receptor is mediated by a G-protein that activate a phosphatidylinositol-calcium second messenger system. The chain is Urotensin-2 receptor (UTS2R) from Macaca mulatta (Rhesus macaque).